The primary structure comprises 334 residues: Holliday junction branch migration complex subunit RuvB (334 aa).

Residues 4-186 (ADRLIAPENP…FGITQRLEYY (183 aa)) are large ATPase domain (RuvB-L). Residues Ile25, Arg26, Gly67, Lys70, Thr71, Thr72, 133–135 (EDY), Arg176, Tyr186, and Arg223 each bind ATP. Thr71 provides a ligand contact to Mg(2+). A small ATPAse domain (RuvB-S) region spans residues 187 to 257 (KVKDLQDIVQ…TADKALNMLD (71 aa)). Residues 260-334 (AEGFDYMDRK…RAYLHFGIEK (75 aa)) are head domain (RuvB-H). Residues Arg315 and Arg320 each coordinate DNA.

This sequence belongs to the RuvB family. As to quaternary structure, homohexamer. Forms an RuvA(8)-RuvB(12)-Holliday junction (HJ) complex. HJ DNA is sandwiched between 2 RuvA tetramers; dsDNA enters through RuvA and exits via RuvB. An RuvB hexamer assembles on each DNA strand where it exits the tetramer. Each RuvB hexamer is contacted by two RuvA subunits (via domain III) on 2 adjacent RuvB subunits; this complex drives branch migration. In the full resolvosome a probable DNA-RuvA(4)-RuvB(12)-RuvC(2) complex forms which resolves the HJ.

It localises to the cytoplasm. It catalyses the reaction ATP + H2O = ADP + phosphate + H(+). Its function is as follows. The RuvA-RuvB-RuvC complex processes Holliday junction (HJ) DNA during genetic recombination and DNA repair, while the RuvA-RuvB complex plays an important role in the rescue of blocked DNA replication forks via replication fork reversal (RFR). RuvA specifically binds to HJ cruciform DNA, conferring on it an open structure. The RuvB hexamer acts as an ATP-dependent pump, pulling dsDNA into and through the RuvAB complex. RuvB forms 2 homohexamers on either side of HJ DNA bound by 1 or 2 RuvA tetramers; 4 subunits per hexamer contact DNA at a time. Coordinated motions by a converter formed by DNA-disengaged RuvB subunits stimulates ATP hydrolysis and nucleotide exchange. Immobilization of the converter enables RuvB to convert the ATP-contained energy into a lever motion, pulling 2 nucleotides of DNA out of the RuvA tetramer per ATP hydrolyzed, thus driving DNA branch migration. The RuvB motors rotate together with the DNA substrate, which together with the progressing nucleotide cycle form the mechanistic basis for DNA recombination by continuous HJ branch migration. Branch migration allows RuvC to scan DNA until it finds its consensus sequence, where it cleaves and resolves cruciform DNA. This is Holliday junction branch migration complex subunit RuvB from Vibrio campbellii (strain ATCC BAA-1116).